We begin with the raw amino-acid sequence, 1250 residues long: Nucleoporin pom152 (1250 aa).

Residues 1 to 79 are pore side; it reads MVTRVASSER…IYLRLLPKFR (79 aa). Residues 80–100 form a helical membrane-spanning segment; that stretch reads IPWLSFQPAATLLQIAIFAAI. Residues 101-1250 form a cisternal side region; that stretch reads NLLLSSLSSL…PQDSTSSSNI (1150 aa).

Component of the nuclear pore complex (NPC). NPC constitutes the exclusive means of nucleocytoplasmic transport. NPCs allow the passive diffusion of ions and small molecules and the active, nuclear transport receptor-mediated bidirectional transport of macromolecules such as proteins, RNAs, ribonucleoparticles (RNPs), and ribosomal subunits across the nuclear envelope.

The protein resides in the nucleus. The protein localises to the nuclear pore complex. It is found in the nucleus membrane. In terms of biological role, functions as a component of the nuclear pore complex (NPC). NPC components, collectively referred to as nucleoporins (NUPs), can play the role of both NPC structural components and of docking or interaction partners for transiently associated nuclear transport factors. This Schizosaccharomyces pombe (strain 972 / ATCC 24843) (Fission yeast) protein is Nucleoporin pom152 (pom152).